We begin with the raw amino-acid sequence, 264 residues long: NAD kinase 1 (264 aa).

Aspartate 45 (proton acceptor) is an active-site residue. Residues 45 to 46, 122 to 123, arginine 148, aspartate 150, 161 to 166, and alanine 185 each bind NAD(+); these read DG, NE, and TAYNKS.

The protein belongs to the NAD kinase family. It depends on a divalent metal cation as a cofactor.

It is found in the cytoplasm. The catalysed reaction is NAD(+) + ATP = ADP + NADP(+) + H(+). Functionally, involved in the regulation of the intracellular balance of NAD and NADP, and is a key enzyme in the biosynthesis of NADP. Catalyzes specifically the phosphorylation on 2'-hydroxyl of the adenosine moiety of NAD to yield NADP. This is NAD kinase 1 from Listeria monocytogenes serotype 4b (strain F2365).